A 471-amino-acid polypeptide reads, in one-letter code: Glutamate--tRNA ligase (471 aa).

Residues 9–19 carry the 'HIGH' region motif; it reads PSPTGYLHVGG. C98, C100, C125, and H127 together coordinate Zn(2+). Residues 237-241 carry the 'KMSKS' region motif; it reads KLSKR. Residue K240 participates in ATP binding.

Belongs to the class-I aminoacyl-tRNA synthetase family. Glutamate--tRNA ligase type 1 subfamily. Monomer. The cofactor is Zn(2+).

The protein resides in the cytoplasm. It carries out the reaction tRNA(Glu) + L-glutamate + ATP = L-glutamyl-tRNA(Glu) + AMP + diphosphate. In terms of biological role, catalyzes the attachment of glutamate to tRNA(Glu) in a two-step reaction: glutamate is first activated by ATP to form Glu-AMP and then transferred to the acceptor end of tRNA(Glu). This is Glutamate--tRNA ligase from Enterobacter sp. (strain 638).